Consider the following 573-residue polypeptide: Urease subunit alpha (573 aa).

The region spanning 136–573 (GGIDCHVHFI…LPMAQRYFLF (438 aa)) is the Urease domain. Positions 141, 143, and 224 each coordinate Ni(2+). K224 is modified (N6-carboxylysine). H226 is a binding site for substrate. Ni(2+)-binding residues include H253 and H279. H327 acts as the Proton donor in catalysis. D367 is a binding site for Ni(2+).

The protein belongs to the metallo-dependent hydrolases superfamily. Urease alpha subunit family. As to quaternary structure, heterotrimer of UreA (gamma), UreB (beta) and UreC (alpha) subunits. Three heterotrimers associate to form the active enzyme. Ni cation serves as cofactor. Carboxylation allows a single lysine to coordinate two nickel ions.

Its subcellular location is the cytoplasm. It carries out the reaction urea + 2 H2O + H(+) = hydrogencarbonate + 2 NH4(+). Its pathway is nitrogen metabolism; urea degradation; CO(2) and NH(3) from urea (urease route): step 1/1. The chain is Urease subunit alpha from Rhodococcus opacus (strain B4).